The following is a 408-amino-acid chain: MVFCGLFSELIKGHSSSNNNGTNVSLAKTIQTNIRSQYSSDLSSYASACKKYSSLKSFDSLLHERTNSIISSLAAQAKTRSLNIESLMEVYGYLLELNQDTVRVIIESKEDVLKNNDLKALVDVYFKSTSKTLDFCNTVEKCVKKAEISQLIIRFAVKQFETETVDTDLGESKKKKYVKTLEEMNKFKAMGDPFDGEFVTQYKSVYDEQVLLLDELRKLKVKLGKKLRNIKTWRILSNVVFATAFVTVFVLSVVAAAMMAPPVLSAVASGLTTPIEVVGMWCNKMWKEYEKAVKRQRGLVLTMELGVQANNVTMVNIKFEVENLSIRISSILKTVNFAVDREENEMATRFAMQEIKKKVEGFTEKIEEVGERAANCSKLIALGRLVVLGHILGLHIVEGGAANIISSV.

Helical transmembrane passes span 239 to 259 and 262 to 282; these read VVFA…AAMM and PVLS…GMWC.

This sequence belongs to the UPF0496 family.

Its subcellular location is the membrane. The chain is UPF0496 protein At5g66670 from Arabidopsis thaliana (Mouse-ear cress).